We begin with the raw amino-acid sequence, 201 residues long: Large ribosomal subunit protein bL25 (201 aa).

This sequence belongs to the bacterial ribosomal protein bL25 family. CTC subfamily. In terms of assembly, part of the 50S ribosomal subunit; part of the 5S rRNA/L5/L18/L25 subcomplex. Contacts the 5S rRNA. Binds to the 5S rRNA independently of L5 and L18.

In terms of biological role, this is one of the proteins that binds to the 5S RNA in the ribosome where it forms part of the central protuberance. The polypeptide is Large ribosomal subunit protein bL25 (Burkholderia vietnamiensis (strain G4 / LMG 22486) (Burkholderia cepacia (strain R1808))).